A 739-amino-acid polypeptide reads, in one-letter code: Catalase-peroxidase 2 (739 aa).

An N-terminal signal peptide occupies residues 1–26; the sequence is MKKSTIPTLSALTLAMSLAFGGSVIA. The segment at residues 105–227 is a cross-link (tryptophyl-tyrosyl-methioninium (Trp-Tyr) (with M-253)); the sequence is WHSAGVYRIF…MGATQMGLIY (123 aa). H106 functions as the Proton acceptor in the catalytic mechanism. Positions 227 to 253 form a cross-link, tryptophyl-tyrosyl-methioninium (Tyr-Met) (with W-105); sequence YVNPEGPNGVPDPLASAKEIRDTFGRM. H268 contributes to the heme b binding site.

It belongs to the peroxidase family. Peroxidase/catalase subfamily. In terms of assembly, homodimer or homotetramer. Heme b is required as a cofactor. In terms of processing, formation of the three residue Trp-Tyr-Met cross-link is important for the catalase, but not the peroxidase activity of the enzyme.

The enzyme catalyses H2O2 + AH2 = A + 2 H2O. The catalysed reaction is 2 H2O2 = O2 + 2 H2O. In terms of biological role, bifunctional enzyme with both catalase and broad-spectrum peroxidase activity. This is Catalase-peroxidase 2 from Shewanella sp. (strain MR-7).